We begin with the raw amino-acid sequence, 103 residues long: Histone H4 (103 aa).

The segment covering 1–14 (MSGRGKGGKGLGKG) has biased composition (gly residues). Residues 1 to 20 (MSGRGKGGKGLGKGGAKRHR) are disordered. Residues 17 to 21 (KRHRK) mediate DNA binding.

This sequence belongs to the histone H4 family. The nucleosome is a histone octamer containing two molecules each of H2A, H2B, H3 and H4 assembled in one H3-H4 heterotetramer and two H2A-H2B heterodimers. The octamer wraps approximately 147 bp of DNA.

It is found in the nucleus. Its subcellular location is the chromosome. Core component of nucleosome. Nucleosomes wrap and compact DNA into chromatin, limiting DNA accessibility to the cellular machineries which require DNA as a template. Histones thereby play a central role in transcription regulation, DNA repair, DNA replication and chromosomal stability. DNA accessibility is regulated via a complex set of post-translational modifications of histones, also called histone code, and nucleosome remodeling. The polypeptide is Histone H4 (Eimeria tenella (Coccidian parasite)).